Reading from the N-terminus, the 216-residue chain is Ribosomal RNA small subunit methyltransferase G (216 aa).

S-adenosyl-L-methionine-binding positions include Gly86, Leu91, 137–138 (VE), and Arg155.

This sequence belongs to the methyltransferase superfamily. RNA methyltransferase RsmG family.

Its subcellular location is the cytoplasm. It catalyses the reaction guanosine(527) in 16S rRNA + S-adenosyl-L-methionine = N(7)-methylguanosine(527) in 16S rRNA + S-adenosyl-L-homocysteine. Functionally, specifically methylates the N7 position of guanine in position 527 of 16S rRNA. The chain is Ribosomal RNA small subunit methyltransferase G from Lawsonia intracellularis (strain PHE/MN1-00).